A 381-amino-acid polypeptide reads, in one-letter code: Spermidine/putrescine import ATP-binding protein PotA (381 aa).

The ABC transporter domain maps to 19 to 249 (VELRKVFKVF…PESPFVADFI (231 aa)). 51 to 58 (GPSGCGKT) is a binding site for ATP.

It belongs to the ABC transporter superfamily. Spermidine/putrescine importer (TC 3.A.1.11.1) family. The complex is composed of two ATP-binding proteins (PotA), two transmembrane proteins (PotB and PotC) and a solute-binding protein (PotD).

The protein resides in the cell inner membrane. The catalysed reaction is ATP + H2O + polyamine-[polyamine-binding protein]Side 1 = ADP + phosphate + polyamineSide 2 + [polyamine-binding protein]Side 1.. Part of the ABC transporter complex PotABCD involved in spermidine/putrescine import. Responsible for energy coupling to the transport system. This Trichodesmium erythraeum (strain IMS101) protein is Spermidine/putrescine import ATP-binding protein PotA.